We begin with the raw amino-acid sequence, 177 residues long: Dual-action ribosomal maturation protein DarP (177 aa).

Basic and acidic residues predominate over residues 1-12; sequence MKIVGDSEHFKQ. Residues 1–26 are disordered; it reads MKIVGDSEHFKQPYDSNDEYVSKTED.

It belongs to the DarP family.

It localises to the cytoplasm. Functionally, member of a network of 50S ribosomal subunit biogenesis factors which assembles along the 30S-50S interface, preventing incorrect 23S rRNA structures from forming. Promotes peptidyl transferase center (PTC) maturation. This chain is Dual-action ribosomal maturation protein DarP, found in Shewanella oneidensis (strain ATCC 700550 / JCM 31522 / CIP 106686 / LMG 19005 / NCIMB 14063 / MR-1).